A 124-amino-acid chain; its full sequence is MPPKDSKQKKDAGKSKKDKDPVNKSGGKAKKKKWSKGKVRDKLNNLVLFDKATYDKLYKEVPNYKLITPAVVSERLKIRGSLARAALQELLGKGLIKLVSKHRAQVIYTRNTKGTDEAAPEKEA.

Basic and acidic residues predominate over residues M1 to V22. The disordered stretch occupies residues M1–G37. Basic residues predominate over residues G27 to G37.

The protein belongs to the eukaryotic ribosomal protein eS25 family. In terms of assembly, component of the small ribosomal subunit.

It is found in the cytoplasm. Component of the small ribosomal subunit. The ribosome is a large ribonucleoprotein complex responsible for the synthesis of proteins in the cell. This is Small ribosomal subunit protein eS25 (rps25) from Danio rerio (Zebrafish).